The chain runs to 341 residues: Ferrochelatase (341 aa).

Positions 189 and 293 each coordinate Fe cation.

The protein belongs to the ferrochelatase family.

The protein localises to the cytoplasm. It catalyses the reaction heme b + 2 H(+) = protoporphyrin IX + Fe(2+). The protein operates within porphyrin-containing compound metabolism; protoheme biosynthesis; protoheme from protoporphyrin-IX: step 1/1. In terms of biological role, catalyzes the ferrous insertion into protoporphyrin IX. This chain is Ferrochelatase, found in Pseudomonas fluorescens (strain Pf0-1).